A 342-amino-acid polypeptide reads, in one-letter code: Nuclear distribution protein nudE homolog 1 (342 aa).

Residues 45–189 are a coiled coil; the sequence is REYEAELETQ…ELAVQQKQEK (145 aa). The segment at 89 to 157 is interaction with PAFAH1B1; sequence EWYRQVSALE…ERNAFLESEL (69 aa). 2 disordered regions span residues 182–203 and 320–342; these read AVQQ…TERT and GTRP…KMLL. A compositionally biased stretch (polar residues) spans 322–342; that stretch reads RPSSTPGPMSHPSQSVVKMLL.

The protein belongs to the nudE family. As to quaternary structure, self-associates. Interacts with PAFAH1B1. Post-translationally, phosphorylated in mitosis.

The protein localises to the cytoplasm. The protein resides in the cytoskeleton. Its subcellular location is the microtubule organizing center. It is found in the centrosome. It localises to the spindle. The protein localises to the chromosome. The protein resides in the centromere. Its subcellular location is the kinetochore. It is found in the cleavage furrow. It localises to the cytoplasmic vesicle membrane. In terms of biological role, required for centrosome duplication and formation and function of the mitotic spindle. In Gallus gallus (Chicken), this protein is Nuclear distribution protein nudE homolog 1 (NDE1).